The primary structure comprises 1744 residues: Complement C4-A (1744 aa).

The N-terminal stretch at methionine 1–glutamine 19 is a signal peptide. A disulfide bond links cysteine 68 and cysteine 97. N-linked (GlcNAc...) asparagine glycosylation is present at asparagine 226. Cysteine 635 and cysteine 669 are joined by a disulfide. The propeptide occupies arginine 676–arginine 679. Intrachain disulfides connect cysteine 702–cysteine 728, cysteine 703–cysteine 735, and cysteine 716–cysteine 736. The Anaphylatoxin-like domain maps to cysteine 702–cysteine 736. A glycan (N-linked (GlcNAc...) asparagine) is linked at asparagine 862. Serine 918 is modified (phosphoserine; by FAM20C). Positions cysteine 1010–glutamine 1013 form a cross-link, isoglutamyl cysteine thioester (Cys-Gln). Residue threonine 1244 is glycosylated (O-linked (GalNAc...) threonine). A glycan (N-linked (GlcNAc...) (complex) asparagine) is linked at asparagine 1328. Asparagine 1391 carries an N-linked (GlcNAc...) asparagine glycan. Sulfotyrosine is present on residues tyrosine 1417, tyrosine 1420, and tyrosine 1422. Residues arginine 1447–arginine 1453 constitute a propeptide that is removed on maturation. Intrachain disulfides connect cysteine 1471/cysteine 1535, cysteine 1583/cysteine 1588, cysteine 1595/cysteine 1673, cysteine 1618/cysteine 1742, and cysteine 1718/cysteine 1727. Positions cysteine 1595–cysteine 1742 constitute an NTR domain.

In terms of assembly, complement circulates in blood as a disulfide-linked trimer of an alpha, beta and gamma chain. Complement C4b is composed of complement C4b-A, complement C4 beta and complement C4 gamma chains that are associated via disulfide bonds. Non-enzymatic component of the C3 convertase, also named C4bC2b, composed of the serine protease complement C2b (C2), as well as complement C4b. Non-enzymatic component of the C5 convertase, also named C4bC2bC3b, composed of the serine protease complement C2b (C2), complement C3b, as well as complement C4b. In terms of processing, prior to secretion, the single-chain precursor is enzymatically cleaved by plasminogen (PLG) to yield non-identical chains alpha, beta and gamma. During activation of the complement systems, the alpha chain is cleaved into C4a and C4b by different proteases depending on the complement pathway: C4b stays linked to the beta and gamma chains, while C4a is released in the plasma. The alpha chain is cleaved by C1S to generate C4a and C4b following activation by the classical complement system. The alpha chain is cleaved to generate C4a and C4b by MASP2 following activation by the lectin complement system. The alpha chain is cleaved by GZMK to generate C4a and C4b following activation by the GZMK complement system. Further degradation of C4b by C1 into the inactive fragments C4c and C4d blocks the generation of C3 convertase. The proteolytic cleavages often are incomplete so that many structural forms can be found in plasma. Post-translationally, upon activation, the internal thioester bond reacts with carbohydrate antigens on the target surface to form amide or ester bonds, leading to covalent association with the surface of pathogens. Ser-1236 of complement C4b interacts with complement C3b via a thioester linkage. In terms of processing, N- and O-glycosylated. O-glycosylated with a core 1 or possibly core 8 glycan. Complement component C4 is expressed at highest levels in the liver, at moderate levels in the adrenal cortex, adrenal medulla, thyroid gland, and the kidney, and at lowest levels in the heart, ovary, small intestine, thymus, pancreas and spleen. The extra-hepatic sites of expression may be important for the local protection and inflammatory response.

It is found in the secreted. The protein localises to the synapse. It localises to the cell projection. The protein resides in the axon. Its subcellular location is the dendrite. It is found in the cell surface. With respect to regulation, specifically inhibited by nanobody hC4Nb8, inhibiting the classical complement pathway. Specifically inhibited by NbB5, NbE11 and NbH9 nanobodies, and to a lesser extent by NbH11 and NbE3 nanobodies. Its function is as follows. Precursor of non-enzymatic components of the classical, lectin and GZMK complement pathways, which consist in a cascade of proteins that leads to phagocytosis and breakdown of pathogens and signaling that strengthens the adaptive immune system. Non-enzymatic component of C3 and C5 convertases. Generated following cleavage by complement proteases (C1S, MASP2 or GZMK, depending on the complement pathway), it covalently attaches to the surface of pathogens, where it acts as an opsonin that marks the surface of antigens for removal. It then recruits the serine protease complement C2b to form the C3 and C5 convertases, which cleave and activate C3 and C5, respectively, the next components of the complement pathways. Complement C4b-A isotype is responsible for effective binding to form amide bonds with immune aggregates or protein antigens, while complement C4b-B isotype catalyzes the transacylation of the thioester carbonyl group to form ester bonds with carbohydrate antigens. In terms of biological role, putative humoral mediator released following cleavage by complement proteases (C1S, MASP2 or GZMK, depending on the complement pathway). While it is strongly similar to anaphylatoxins, its role is unclear. Was reported to act as a mediator of local inflammatory process; however these effects were probably due to contamination with C3a and/C5a anaphylatoxins in biological assays. This is Complement C4-A from Homo sapiens (Human).